Reading from the N-terminus, the 334-residue chain is ADP-L-glycero-D-manno-heptose-6-epimerase (334 aa).

Residues 11-12 (FI), 32-33 (DN), K39, K54, 77-81 (QGACS), and N94 contribute to the NADP(+) site. The Proton acceptor role is filled by Y141. K145 serves as a coordination point for NADP(+). Residue N171 participates in substrate binding. Positions 172 and 180 each coordinate NADP(+). K180 functions as the Proton acceptor in the catalytic mechanism. Residues R182, H189, 203–206 (FGSN), R216, and Y295 each bind substrate.

The protein belongs to the NAD(P)-dependent epimerase/dehydratase family. HldD subfamily. As to quaternary structure, homopentamer. Requires NADP(+) as cofactor.

The catalysed reaction is ADP-D-glycero-beta-D-manno-heptose = ADP-L-glycero-beta-D-manno-heptose. Its pathway is nucleotide-sugar biosynthesis; ADP-L-glycero-beta-D-manno-heptose biosynthesis; ADP-L-glycero-beta-D-manno-heptose from D-glycero-beta-D-manno-heptose 7-phosphate: step 4/4. Its function is as follows. Catalyzes the interconversion between ADP-D-glycero-beta-D-manno-heptose and ADP-L-glycero-beta-D-manno-heptose via an epimerization at carbon 6 of the heptose. This chain is ADP-L-glycero-D-manno-heptose-6-epimerase, found in Neisseria meningitidis serogroup C (strain 053442).